The sequence spans 514 residues: GTPase Obg (514 aa).

In terms of domain architecture, Obg spans 2–159 (ATFVDRVTVH…GDILLELKTV (158 aa)). The segment at 62–88 (RRPHRSSGNGGFGMGDHRSGHTGEDLE) is disordered. Residues 76–85 (GDHRSGHTGE) show a composition bias toward basic and acidic residues. The OBG-type G domain maps to 160–336 (ADIALVGYPS…LSFALAELVE (177 aa)). GTP is bound by residues 166–173 (GYPSAGKS), 191–195 (FTTLH), 212–215 (DVPG), 288–291 (NKID), and 317–319 (STV). Residues Ser-173 and Thr-193 each contribute to the Mg(2+) site. The 85-residue stretch at 356 to 440 (PKTVDDSGFV…ENGVVFDWEP (85 aa)) folds into the OCT domain.

Belongs to the TRAFAC class OBG-HflX-like GTPase superfamily. OBG GTPase family. Monomer. Requires Mg(2+) as cofactor.

It is found in the cytoplasm. Its function is as follows. An essential GTPase which binds GTP, GDP and possibly (p)ppGpp with moderate affinity, with high nucleotide exchange rates and a fairly low GTP hydrolysis rate. Plays a role in control of the cell cycle, stress response, ribosome biogenesis and in those bacteria that undergo differentiation, in morphogenesis control. This is GTPase Obg from Leifsonia xyli subsp. xyli (strain CTCB07).